We begin with the raw amino-acid sequence, 104 residues long: Secretoglobin family 3A member 1 (104 aa).

The first 20 residues, 1 to 20 (MKLAALLGLCVALSCSSAAA), serve as a signal peptide directing secretion.

Belongs to the secretoglobin family. UGRP subfamily. In terms of assembly, homodimer; disulfide-linked. Highly expressed in lung and prostate. Also found in mammary gland, spleen, pancreas, testis and liver. Detected throughout the airway epithelium in lung, with highest expression in large airways. Found in lung submucosal glands where it localizes to acinar and ductile cells. Not detected in respiratory bronchioles, alveolar ducts or alveolar epithelium. In mammary gland, specifically localizes to luminal epithelial cells.

It localises to the secreted. Its function is as follows. Secreted cytokine-like protein. Inhibits cell growth in vitro. The polypeptide is Secretoglobin family 3A member 1 (SCGB3A1) (Homo sapiens (Human)).